The sequence spans 1182 residues: Protein patched homolog 2 (1182 aa).

Over 1–57 (MVRPLSLGELPPSYTPPARSSAPHILAGSLQAPLWLRAYFQGLLFSLGCRIQKHCGK) the chain is Cytoplasmic. A helical transmembrane segment spans residues 58–78 (VLFLGLVAFGALALGLRVAVI). Over 79–394 (ETDLEQLWVE…DILRAFSEVS (316 aa)) the chain is Extracellular. N-linked (GlcNAc...) asparagine glycosylation is present at Asn370. Residues 394–552 (STTRVVGGYL…MLVFPAILSL (159 aa)) form the SSD domain. Residues 395–414 (TTRVVGGYLLMLAYACVTML) form a helical membrane-spanning segment. The Cytoplasmic segment spans residues 415-428 (RWDCAQSQGAVGLA). The helical transmembrane segment at 429 to 449 (GVLLVALAVASGLGLCALLGI) threads the bilayer. Residues 450 to 457 (TFNAATTQ) are Extracellular-facing. The helical transmembrane segment at 458–478 (VLPFLALGIGVDDIFLLAHAF) threads the bilayer. At 479–501 (TKAPPDTPLPERMGECLRSTGTS) the chain is on the cytoplasmic side. A helical membrane pass occupies residues 502 to 522 (VALTSVNNMVAFFMAALVPIP). Topologically, residues 523–531 (ALRAFSLQA) are extracellular. Residues 532–552 (AIVVGCNFAAVMLVFPAILSL) form a helical membrane-spanning segment. At 553-686 (DLRRRHRQRL…APLLLQTRAK (134 aa)) the chain is on the cytoplasmic side. A helical transmembrane segment spans residues 687-707 (ALVLLFFGALLGLSLYGATLV). Residues 708–963 (QDGLALTDVV…WEQYLGLRRC (256 aa)) are Extracellular-facing. The N-linked (GlcNAc...) asparagine glycan is linked to Asn812. The chain crosses the membrane as a helical span at residues 964–984 (FLLAVCILLVCTFLVCALLLL). The Cytoplasmic portion of the chain corresponds to 985–991 (SPWTAGL). A helical membrane pass occupies residues 992–1012 (IVLVLAMMTVELFGIMGFLGI). Residue Lys1013 is a topological domain, extracellular. Residues 1014–1034 (LSAIPVVILVASIGIGVEFTV) form a helical membrane-spanning segment. The Cytoplasmic portion of the chain corresponds to 1035 to 1064 (HVALGFLTSHGSRNLRAASALEQTFAPVTD). A helical transmembrane segment spans residues 1065–1085 (GAVSTLLGLLMLAGSNFDFII). A topological domain (extracellular) is located at residue Arg1086. A helical membrane pass occupies residues 1087–1107 (YFFVVLTVLTLLGLLHGLLLL). Topologically, residues 1108-1182 (PVLLSILGPP…YVHPASEEPT (75 aa)) are cytoplasmic.

The protein belongs to the patched family. Expressed in epithelial cells of the developing hair, tooth and whisker.

It is found in the membrane. Its function is as follows. Plays a role in the control of cellular growth. May have a role in epidermal development. May act as a receptor for Sonic hedgehog (SHH). In Mus musculus (Mouse), this protein is Protein patched homolog 2 (Ptch2).